We begin with the raw amino-acid sequence, 352 residues long: Threonine synthase (352 aa).

Lysine 59 is modified (N6-(pyridoxal phosphate)lysine). Pyridoxal 5'-phosphate is bound by residues asparagine 85, 185–189 (GNAGN), and threonine 314.

This sequence belongs to the threonine synthase family. Pyridoxal 5'-phosphate is required as a cofactor.

It catalyses the reaction O-phospho-L-homoserine + H2O = L-threonine + phosphate. It participates in amino-acid biosynthesis; L-threonine biosynthesis; L-threonine from L-aspartate: step 5/5. In terms of biological role, catalyzes the gamma-elimination of phosphate from L-phosphohomoserine and the beta-addition of water to produce L-threonine. This chain is Threonine synthase (thrC), found in Bacillus sp. (strain ULM1).